Consider the following 185-residue polypeptide: MASEAKESPANNPGLSTVRDEATKGYIMQQTMFRVKDPKASLDFYSRVLGMSLLKRLDFSEMKFSLYFLGYEDTSTAPTDPTERTVWTFGRPATIELTHNWGTESDPEFKGYHNGNSEPRGFGHIGVTVDDVHKACERFEQLGVEFVKKPHDGKMKNIAFIKDPDGYWIEIFDLKTIGTTAGNAA.

Residues methionine 1 to glutamate 21 are disordered. Residues isoleucine 27–leucine 174 form the VOC domain. Residues glutamine 30 and arginine 34 each contribute to the substrate site. Glutamine 30 is a binding site for Zn(2+). Zn(2+) is bound at residue glutamate 96. Residues asparagine 100, arginine 120, histidine 124, and lysine 154 to methionine 155 contribute to the substrate site. Residue histidine 124 coordinates Zn(2+). A Zn(2+)-binding site is contributed by glutamate 170. Catalysis depends on glutamate 170, which acts as the Proton donor/acceptor.

Belongs to the glyoxalase I family. It depends on Zn(2+) as a cofactor.

It carries out the reaction (R)-S-lactoylglutathione = methylglyoxal + glutathione. The protein operates within secondary metabolite metabolism; methylglyoxal degradation; (R)-lactate from methylglyoxal: step 1/2. Its function is as follows. Catalyzes the conversion of hemimercaptal, formed from methylglyoxal and glutathione, to S-lactoylglutathione. This chain is Lactoylglutathione lyase (GLY I), found in Brassica juncea (Indian mustard).